Reading from the N-terminus, the 76-residue chain is VpAmp1.0 (76 aa).

A signal peptide spans 1-22 (MKLINLVPVFFVLIIVVDYCHS). The residue at position 41 (isoleucine 41) is an Isoleucine amide. A propeptide spanning residues 42–76 (GKRSVESQRYVDLNRRDLEQDLQELQDFLDQISEH) is cleaved from the precursor.

This sequence belongs to the non-disulfide-bridged peptide (NDBP) superfamily. Short antimicrobial peptide (group 4) family. Expressed by the venom gland.

The protein localises to the secreted. Its subcellular location is the target cell membrane. In terms of biological role, antimicrobial peptide with potent activity against Gram-positive bacteria S.aureus (MIC=2.5 uM) and S.agalactiaea (MIC=2.5 uM), and Gram-negative bacteria E.coli (MIC=24 uM) and P.aeruginosa (MIC=2.5 uM), as well as against yeasts Candida albicans (MIC=6.25 uM) and C.glabrata (MIC&gt;50 uM). Also elicits high hemolysis on human erythrocytes (HC(50)=9.2 uM). In Mesomexovis punctatus (Scorpion), this protein is VpAmp1.0.